The following is a 381-amino-acid chain: Cytochrome b (381 aa).

The next 4 membrane-spanning stretches (helical) occupy residues 34 to 54, 78 to 99, 114 to 134, and 179 to 199; these read FGSLLGLCLVIQIVTGLFLAM, WLIRNIHANGASLFFVCIYFHI, WNIGVILLFLLMATAFVGYVL, and FFAFHFLLPFLITALMIIHIL. 2 residues coordinate heme b: histidine 84 and histidine 98. Residues histidine 183 and histidine 197 each coordinate heme b. Residue histidine 202 coordinates a ubiquinone. 4 helical membrane passes run 227–247, 289–309, 321–341, and 348–368; these read YKDALGFLSLLILLGILALFL, LGGVLALLFSILILMLVPFLH, LTQVFFWILVANMLVLTWIGG, and FILIGQIASISYFSLFLIAIP.

The protein belongs to the cytochrome b family. In terms of assembly, the cytochrome bc1 complex contains 3 respiratory subunits (MT-CYB, CYC1 and UQCRFS1), 2 core proteins (UQCRC1 and UQCRC2) and probably 6 low-molecular weight proteins. The cofactor is heme b.

Its subcellular location is the mitochondrion inner membrane. Its function is as follows. Component of the ubiquinol-cytochrome c reductase complex (complex III or cytochrome b-c1 complex) that is part of the mitochondrial respiratory chain. The b-c1 complex mediates electron transfer from ubiquinol to cytochrome c. Contributes to the generation of a proton gradient across the mitochondrial membrane that is then used for ATP synthesis. This Carcharodon carcharias (Great white shark) protein is Cytochrome b (mt-cyb).